A 102-amino-acid chain; its full sequence is Large ribosomal subunit protein uL24 (102 aa).

Belongs to the universal ribosomal protein uL24 family. Part of the 50S ribosomal subunit.

One of two assembly initiator proteins, it binds directly to the 5'-end of the 23S rRNA, where it nucleates assembly of the 50S subunit. Functionally, one of the proteins that surrounds the polypeptide exit tunnel on the outside of the subunit. This Limosilactobacillus fermentum (strain NBRC 3956 / LMG 18251) (Lactobacillus fermentum) protein is Large ribosomal subunit protein uL24.